The primary structure comprises 266 residues: Chymotrypsin-like elastase family member 1 (266 aa).

The signal sequence occupies residues 1 to 16; sequence MLRFLVFATLVLYGHS. Residues 17–26 constitute a propeptide, activation peptide; the sequence is TQDFPETNAR. The Peptidase S1 domain occupies 27–264; that stretch reads VVGGTEAGRN…YISWINKTIA (238 aa). C56 and C72 are disulfide-bonded. H71 functions as the Charge relay system in the catalytic mechanism. Residues D85, N87, Q90, and E95 each coordinate Ca(2+). N-linked (GlcNAc...) asparagine glycosylation is present at N87. The active-site Charge relay system is the D119. 3 disulfides stabilise this stretch: C153–C220, C184–C200, and C210–C240. S214 (charge relay system) is an active-site residue. Residues N241 and N260 are each glycosylated (N-linked (GlcNAc...) asparagine).

This sequence belongs to the peptidase S1 family. Elastase subfamily. It depends on Ca(2+) as a cofactor.

It localises to the secreted. It catalyses the reaction Hydrolysis of proteins, including elastin. Preferential cleavage: Ala-|-Xaa.. Its function is as follows. Serine proteases that hydrolyze many proteins in addition to elastin. The protein is Chymotrypsin-like elastase family member 1 (CELA1) of Macaca fascicularis (Crab-eating macaque).